The sequence spans 102 residues: MVRVSTFAAILAMALSVTANVTPNDAGAKNVGTGNGQQFITGGCVNGTDCQSRCCAGNGENKGVCSNEVAANQNGKTGCGFEDPNKAQTVKEAKEQVKKQGF.

The N-terminal stretch at 1–19 (MVRVSTFAAILAMALSVTA) is a signal peptide. Asparagine 46 carries N-linked (GlcNAc...) asparagine glycosylation.

The protein resides in the secreted. Secreted effector involved in biotrophic colonization of plant cells. In Pyricularia oryzae (strain 70-15 / ATCC MYA-4617 / FGSC 8958) (Rice blast fungus), this protein is Biotrophy-associated secreted protein 2.